The following is a 245-amino-acid chain: MKQVDLNADLAEGCGSDEALLQLITSANIACAQHAGSIADIRAALAYAQQNGVRIGAHPGYPDRENFGRTEMNLSEADLRACLNYQLGALQALCRDQGLEMAYVKPHGAMYNQAAKNRALADTVARIVADFDPKLKLMALSGSLLLEAGKAAGLGVISEVFADRRYMPDGTLVPRSRPDAQVDSDEEAIAQVLQMVRDGQVKAVDGSLVAVQADSICLHGDGPHAVVFAEKIRQELLAAGIKVSA.

It belongs to the LamB/PxpA family. As to quaternary structure, forms a complex composed of PxpA, PxpB and PxpC.

It catalyses the reaction 5-oxo-L-proline + ATP + 2 H2O = L-glutamate + ADP + phosphate + H(+). Its function is as follows. Catalyzes the cleavage of 5-oxoproline to form L-glutamate coupled to the hydrolysis of ATP to ADP and inorganic phosphate. The protein is 5-oxoprolinase subunit A of Neisseria meningitidis serogroup A / serotype 4A (strain DSM 15465 / Z2491).